A 444-amino-acid polypeptide reads, in one-letter code: Adenylosuccinate lyase (444 aa).

N(6)-(1,2-dicarboxyethyl)-AMP is bound by residues 9–10 (RY), 73–75 (KHD), and 97–98 (TS). The active-site Proton donor/acceptor is histidine 145. Glutamine 219 provides a ligand contact to N(6)-(1,2-dicarboxyethyl)-AMP. Serine 269 (proton donor/acceptor) is an active-site residue. Residues serine 270, 275-277 (KRN), asparagine 283, and 314-318 (SAERI) contribute to the N(6)-(1,2-dicarboxyethyl)-AMP site.

The protein belongs to the lyase 1 family. Adenylosuccinate lyase subfamily. In terms of assembly, homotetramer. Residues from neighboring subunits contribute catalytic and substrate-binding residues to each active site.

It catalyses the reaction N(6)-(1,2-dicarboxyethyl)-AMP = fumarate + AMP. It carries out the reaction (2S)-2-[5-amino-1-(5-phospho-beta-D-ribosyl)imidazole-4-carboxamido]succinate = 5-amino-1-(5-phospho-beta-D-ribosyl)imidazole-4-carboxamide + fumarate. It participates in purine metabolism; AMP biosynthesis via de novo pathway; AMP from IMP: step 2/2. It functions in the pathway purine metabolism; IMP biosynthesis via de novo pathway; 5-amino-1-(5-phospho-D-ribosyl)imidazole-4-carboxamide from 5-amino-1-(5-phospho-D-ribosyl)imidazole-4-carboxylate: step 2/2. Catalyzes two reactions in de novo purine nucleotide biosynthesis. Catalyzes the breakdown of 5-aminoimidazole- (N-succinylocarboxamide) ribotide (SAICAR or 2-[5-amino-1-(5-phospho-beta-D-ribosyl)imidazole-4-carboxamido]succinate) to 5-aminoimidazole-4-carboxamide ribotide (AICAR or 5-amino-1-(5-phospho-beta-D-ribosyl)imidazole-4-carboxamide) and fumarate, and of adenylosuccinate (ADS or N(6)-(1,2-dicarboxyethyl)-AMP) to adenosine monophosphate (AMP) and fumarate. The polypeptide is Adenylosuccinate lyase (purB) (Archaeoglobus fulgidus (strain ATCC 49558 / DSM 4304 / JCM 9628 / NBRC 100126 / VC-16)).